The sequence spans 90 residues: uncharacterized protein (90 aa).

Residues 12-32 (VVGGLSFWSFSAGVIMIVNAF) form a helical membrane-spanning segment.

The protein localises to the membrane. This is an uncharacterized protein from Mycoplasma pneumoniae (strain ATCC 29342 / M129 / Subtype 1) (Mycoplasmoides pneumoniae).